The following is a 413-amino-acid chain: CinA-like protein (413 aa).

It belongs to the CinA family.

This Geobacter sulfurreducens (strain ATCC 51573 / DSM 12127 / PCA) protein is CinA-like protein.